The following is a 429-amino-acid chain: Serine--tRNA ligase (429 aa).

236-238 is a binding site for L-serine; sequence TAE. 267-269 contacts ATP; the sequence is RSE. Glu-290 provides a ligand contact to L-serine. Residue 354 to 357 coordinates ATP; the sequence is EISS. Ser-390 contributes to the L-serine binding site.

The protein belongs to the class-II aminoacyl-tRNA synthetase family. Type-1 seryl-tRNA synthetase subfamily. Homodimer. The tRNA molecule binds across the dimer.

The protein localises to the cytoplasm. The catalysed reaction is tRNA(Ser) + L-serine + ATP = L-seryl-tRNA(Ser) + AMP + diphosphate + H(+). The enzyme catalyses tRNA(Sec) + L-serine + ATP = L-seryl-tRNA(Sec) + AMP + diphosphate + H(+). The protein operates within aminoacyl-tRNA biosynthesis; selenocysteinyl-tRNA(Sec) biosynthesis; L-seryl-tRNA(Sec) from L-serine and tRNA(Sec): step 1/1. Its function is as follows. Catalyzes the attachment of serine to tRNA(Ser). Is also able to aminoacylate tRNA(Sec) with serine, to form the misacylated tRNA L-seryl-tRNA(Sec), which will be further converted into selenocysteinyl-tRNA(Sec). In Photorhabdus laumondii subsp. laumondii (strain DSM 15139 / CIP 105565 / TT01) (Photorhabdus luminescens subsp. laumondii), this protein is Serine--tRNA ligase.